Reading from the N-terminus, the 498-residue chain is MWNDTQMTEIVIPPVDWRVATQLSIIFGWASVLLVIALFVPRSRTRIVGYLAMVGAMVAAAVGIPLWGVNAETFSGMLRLDSYSLTLNWLFLAAAAITMVLSLDYLPRQGIERSEYYVLVLFATGGMMLLAQGADLIILFLGLELLSIVLYVLTGFAYPRNASEEAGMKYLLIGAFAGGFVVFGIALLYGATGSMNLRAIGETLAQQTLTLEERIYLLAGAALVVVGFGYKVAMAPFHMWAPDVYEGAPTPIAGLLSVGSKAAGFAALLRFLVEALAGEWQIWAPVLAVLAIATLAVGNIGALTQRNVKRMLAYSSIGHAGYILFGVIAAGAPGGIAGQRGVEGVLLYLIAYTFTNLGAFGVLIALEHRGEAAWDMSDLAGLWSRRPWLAVAMAVCMLSLAGVPPTGGFWGKFYVFTAAWLSGMGWITVIGVIVAAIAAFYYLRIVAQMFMAEPAREVPLPMDRALRAGLALATLGVLILGFLPTPAIDLVQRVVLGG.

14 consecutive transmembrane segments (helical) span residues 19–39, 47–67, 83–103, 114–134, 136–156, 171–191, 215–235, 249–269, 282–302, 317–337, 345–365, 389–409, 420–440, and 468–488; these read VATQ…IALF, IVGY…IPLW, YSLT…VLSL, SEYY…AQGA, LIIL…LTGF, LLIG…LYGA, IYLL…VAMA, PTPI…AALL, IWAP…NIGA, IGHA…GGIA, VLLY…VLIA, LAVA…TGGF, WLSG…IAAF, and AGLA…TPAI.

The protein belongs to the complex I subunit 2 family. NDH-1 is composed of 14 different subunits. Subunits NuoA, H, J, K, L, M, N constitute the membrane sector of the complex.

The protein localises to the cell membrane. The catalysed reaction is a quinone + NADH + 5 H(+)(in) = a quinol + NAD(+) + 4 H(+)(out). In terms of biological role, NDH-1 shuttles electrons from NADH, via FMN and iron-sulfur (Fe-S) centers, to quinones in the respiratory chain. The immediate electron acceptor for the enzyme in this species is believed to be ubiquinone. Couples the redox reaction to proton translocation (for every two electrons transferred, four hydrogen ions are translocated across the cytoplasmic membrane), and thus conserves the redox energy in a proton gradient. The polypeptide is NADH-quinone oxidoreductase subunit N 2 (Roseiflexus castenholzii (strain DSM 13941 / HLO8)).